The chain runs to 269 residues: Eukaryotic translation initiation factor 3 subunit G-1 (269 aa).

The 79-residue stretch at 188–266 (AAIRISNLSE…LILSVEWSKP (79 aa)) folds into the RRM domain.

It belongs to the eIF-3 subunit G family. As to quaternary structure, component of the eukaryotic translation initiation factor 3 (eIF-3) complex. The eIF-3 complex interacts with pix.

The protein localises to the cytoplasm. Functionally, RNA-binding component of the eukaryotic translation initiation factor 3 (eIF-3) complex, which is involved in protein synthesis of a specialized repertoire of mRNAs and, together with other initiation factors, stimulates binding of mRNA and methionyl-tRNAi to the 40S ribosome. The eIF-3 complex specifically targets and initiates translation of a subset of mRNAs involved in cell proliferation. This subunit can bind 18S rRNA. The chain is Eukaryotic translation initiation factor 3 subunit G-1 from Drosophila mojavensis (Fruit fly).